Here is a 130-residue protein sequence, read N- to C-terminus: Small ribosomal subunit protein uS9 (130 aa).

It belongs to the universal ribosomal protein uS9 family.

The polypeptide is Small ribosomal subunit protein uS9 (Shewanella halifaxensis (strain HAW-EB4)).